The chain runs to 126 residues: uncharacterized protein (126 aa).

One can recognise an HTH hxlR-type domain in the interval 20–118; the sequence is CPSREVLKHV…WIELNLPEVL (99 aa).

This is an uncharacterized protein from Escherichia coli (strain K12).